A 626-amino-acid polypeptide reads, in one-letter code: MSTDWKDLPVAPWLIDTMEQFGFTDMTPVQASVIPMFAGNKDVIVEAVTGSGKTIAFLVPLIQRMLNLLKEGPAVSGRVYSVVVSPTRELARQTYEVLQSILEMGCPEADASDKITLEKKKKGKAAPTMPKKIRGQLIMGGDLPSHMDLKNFLRDKPQIIVATPGRLLELLRAPQIKTSAFDSLVLDEADRLLDLGFGRDITSIINILPKQRRTGLFSATITDAIQNLVKIGLRNPVKIVVKVGGKKEQKTPLSLGLSYVVLEPREKLAYALNLLSIYPYRKAIVYLPTCAAVTYYQQMFSHLNEGREEPYEIYGLHGKLPSSTRIKILNKYQKTGAQAILMTTDIAARGLDIPEVDLVVQLDPPSDADTFQHRCGRAGRAGRQGQAIVLLHKGREEEYVDLMRVRKVKLRPYTGPGSELEGEKLDQEATELYTKLRKWVLEDRQRHDQALLSFVSFVRFYSKHVAQSIFRIQSLDLPGLAASYGLLRLPKMPELRTKDNERPENTWLGEVIDFDTYSYKNPAKEEARLKELEAHKEAMKNKVKIHKTKNDVQKANRAWSSTLQKKEEKSERHQKKQTRINEKIKRDFEEAKDLKQEESKEVVNDWKDMVKKSKKRKVDLPTFDDL.

The Q motif signature appears at 3–31; the sequence is TDWKDLPVAPWLIDTMEQFGFTDMTPVQA. In terms of domain architecture, Helicase ATP-binding spans 34-239; it reads IPMFAGNKDV…KIGLRNPVKI (206 aa). ATP is bound at residue 47-54; that stretch reads AVTGSGKT. The short motif at 187–190 is the DEAD box element; it reads DEAD. The Helicase C-terminal domain occupies 273–437; it reads NLLSIYPYRK…EATELYTKLR (165 aa). The stretch at 523 to 604 forms a coiled coil; sequence AKEEARLKEL…KQEESKEVVN (82 aa). The disordered stretch occupies residues 549–626; it reads KNDVQKANRA…KVDLPTFDDL (78 aa). Over residues 579–611 the composition is skewed to basic and acidic residues; sequence RINEKIKRDFEEAKDLKQEESKEVVNDWKDMVK.

It belongs to the DEAD box helicase family. DDX55/SPB4 subfamily.

It is found in the nucleus. The protein resides in the nucleolus. ATP-binding RNA helicase involved in the biogenesis of 60S ribosomal subunits. Required for the normal formation of 18S rRNA through the processing of pre-rRNAs at sites A0, A1 and A2, and the normal formation of 25S and 5.8S rRNAs through the processing of pre-rRNAs at sites C1 and C2. This chain is ATP-dependent rRNA helicase SPB4 (SPB4), found in Yarrowia lipolytica (strain CLIB 122 / E 150) (Yeast).